Consider the following 330-residue polypeptide: MSQNTLKVHDLNEDAEFDENGVEVFDEKALVEQEPSDNDLAEEELLSQGATQRVLDATQLYLGEIGYSPLLTAEEEVYFARRALRGDVASRRRMIESNLRLVVKIARRYGNRGLALLDLIEEGNLGLIRAVEKFDPERGFRFSTYATWWIRQTIERAIMNQTRTIRLPIHIVKELNVYLRTARELSHKLDHEPSAEEIAEQLDKPVDDVSRMLRLNERITSVDTPLGGDSEKALLDILADEKENGPEDTTQDDDMKQSIVKWLFELNAKQREVLARRFGLLGYEAATLEDVGREIGLTRERVRQIQVEGLRRLREILQTQGLNIEALFRE.

The sigma-70 factor domain-1 stretch occupies residues 56-89 (DATQLYLGEIGYSPLLTAEEEVYFARRALRGDVA). The sigma-70 factor domain-2 stretch occupies residues 94 to 164 (MIESNLRLVV…ERAIMNQTRT (71 aa)). The Interaction with polymerase core subunit RpoC signature appears at 118–121 (DLIE). The sigma-70 factor domain-3 stretch occupies residues 174 to 249 (ELNVYLRTAR…DEKENGPEDT (76 aa)). The tract at residues 262-315 (WLFELNAKQREVLARRFGLLGYEAATLEDVGREIGLTRERVRQIQVEGLRRLRE) is sigma-70 factor domain-4. Residues 288 to 307 (LEDVGREIGLTRERVRQIQV) constitute a DNA-binding region (H-T-H motif).

It belongs to the sigma-70 factor family. RpoS subfamily. In terms of assembly, interacts with the RNA polymerase core enzyme and RssB.

The protein resides in the cytoplasm. In terms of biological role, sigma factors are initiation factors that promote the attachment of RNA polymerase to specific initiation sites and are then released. This sigma factor is the master transcriptional regulator of the stationary phase and the general stress response. Controls, positively or negatively, the expression of several hundred genes, which are mainly involved in metabolism, transport, regulation and stress management. Functionally, protects stationary phase cells from killing induced by endoribonuclease MazF. The sequence is that of RNA polymerase sigma factor RpoS from Escherichia coli (strain K12).